Here is an 815-residue protein sequence, read N- to C-terminus: MRVPLSWLQDLVQLNETVEILAEGLSMAGFEVEAIDDLASHAQGVVVGLVKDHQPHPNADKLSVCQVDVGSGEGLQIVCGAPNVRIGIHVPVAMVGATLPAVGIKIKASELRGVPSQGMICSLAELGLESNGNGIAILEEIAENVPDLGQPVGPLLGLDDTVLELAITANRPDGMSMVGIAREVAALTGASLQLPQLDMAPIHKSFEPDSTSSASMLKGGLYGLTALENVDGELTSPAWLKQRLERSGCKSVNGVVDITNLVMLEQGQPLHAFDIDALEMITGQTVSAESFGLRQARNNELFNGLDGHQLQLNENCQIVTCHDIPIALAGVMGSAESGVSAKTRRVWLESAMFTPTAVRTTCRAVGLRTDASSRFEKGLPVEMTLASARRAVTLMEEHLGIKSNGCWVYGESPKSAEPVKLRREAIHRLLGPIGVENDNRYLEDDIIETSLLALGCELSPYNEGWLVIVPPSRRRDLSREVDLIEEVSRLVGFDRFEANLPDPLEPGGLTTAQTAERLLRQMLCGAGLQEVTTLSLVGADSDEPQRIAISNPLLAETSHLRTNLWEEHLRICQRNLQSSQPGCWLYEIGNVYTVTDELINQRAVLGGVICAERSFERWSTSGKIKSMTYHQARGQLSQVFQGLKLDINDRPLKDNHSLHPGRSAELFVEGKLLGDFGQLHPALSERLDLPEATYLFALDLQCIIQAATRSNRWNPTFRPFPTVPAMELDLAVIVSKECSCSDLIQAIRKAGKPLLEHVELIDRFEGGQLDPYSCSQAFRLRYRSKDRTLSEDKVNPIHEKVRQALVKQFSAELRS.

The tRNA-binding domain occupies 39-153 (ASHAQGVVVG…NVPDLGQPVG (115 aa)). One can recognise a B5 domain in the interval 414-498 (KSAEPVKLRR…RLVGFDRFEA (85 aa)). 4 residues coordinate Mg(2+): Asp476, Asp482, Glu485, and Glu486. Residues 721–814 (PTVPAMELDL…LVKQFSAELR (94 aa)) enclose the FDX-ACB domain.

The protein belongs to the phenylalanyl-tRNA synthetase beta subunit family. Type 1 subfamily. As to quaternary structure, tetramer of two alpha and two beta subunits. Mg(2+) is required as a cofactor.

Its subcellular location is the cytoplasm. It catalyses the reaction tRNA(Phe) + L-phenylalanine + ATP = L-phenylalanyl-tRNA(Phe) + AMP + diphosphate + H(+). The polypeptide is Phenylalanine--tRNA ligase beta subunit (Prochlorococcus marinus (strain MIT 9313)).